A 555-amino-acid chain; its full sequence is Disabled homolog 1 (555 aa).

The tract at residues 1-26 (MSTETELQVAVKTSAKKDSRKKGQDR) is disordered. Basic and acidic residues predominate over residues 15-26 (AKKDSRKKGQDR). A PID domain is found at 36–189 (KGEGVRYKAK…CEQAVYQTIL (154 aa)). Tyrosine 198, tyrosine 220, and tyrosine 232 each carry phosphotyrosine. Disordered regions lie at residues 384-410 (LTPL…RQKM), 418-437 (FQMA…PSLT), and 468-555 (NLTP…QAGS). Over residues 391-403 (PGTSDSTRPSPQT) the composition is skewed to polar residues. Low complexity-rich tracts occupy residues 470–479 (TPVTSTTPST) and 487–501 (PRQS…SHAS). Serine 491 bears the Phosphoserine; by CDK5 mark. Residues 504-513 (TTDDIFEEGF) show a composition bias toward acidic residues.

In terms of assembly, associates with the SH2 domains of SRC, FYN and ABL. Interacts (phosphorylated on tyrosine residues) with CRK and CRKL (via respective SH2 domain). Interacts with DAB2IP, SIAH1, LRP8 and VLDLR. Interacts with LRP1. Interacts with APLP1 (via NPXY motif). Interacts with DAB2IP. Interacts with ZSWIM8. Phosphorylated by FYN on Tyr-198 and Tyr-220 upon reelin induction in embryonic neurons. Also phosphorylated on Ser-491 independently of reelin signaling. In terms of processing, ubiquitinated by various cullin-5-RING E3 ubiquitin-protein ligase complexes (ECS complexes) following ligand-binding and phosphorylation, leading to its degradation. Ubiquitinated by the ECS(SOCS7) complex in the cortical plate of the developing cerebral cortex following ligand-binding and phosphorylation by FYN, leading to its degradation by the proteasome. Recognized by ZSWIM8 through a disorder targets misorder mechanism that eliminates misfolded DAB1 via ubiquitination and proteasomal degradation.

Its subcellular location is the cytoplasm. In terms of biological role, signaling adapter of the reelin-mediated signaling pathway, which regulates the migration and differentiation of postmitotic neurons during brain development. Mediates intracellular transduction of Reelin signaling following reelin (RELN)-binding to its receptor: acts by docking proteins through its phosphotyrosine residues and PID domain. This chain is Disabled homolog 1 (DAB1), found in Macaca fascicularis (Crab-eating macaque).